The chain runs to 156 residues: Cyclin-dependent kinase inhibitor 2A (156 aa).

Met-1 carries the N-acetylmethionine modification. Ser-7 and Ser-8 each carry phosphoserine. ANK repeat units follow at residues 11–40, 44–72, 77–106, and 110–139; these read PSAD…LPNA, YGRR…EPNC, TLTR…RLDV, and WGRL…GTRG. Phosphoserine is present on residues Ser-140 and Ser-152.

It belongs to the CDKN2 cyclin-dependent kinase inhibitor family. In terms of assembly, heterodimer with CDK4 or CDK6. Predominant p16 complexes contained CDK6. Interacts with CDK4 (both 'T-172'-phosphorylated and non-phosphorylated forms); the interaction inhibits cyclin D-CDK4 kinase activity. Interacts with ISCO2. Post-translationally, phosphorylation seems to increase interaction with CDK4. Widely expressed but not detected in brain or skeletal muscle. Isoform 3 is pancreas-specific.

Its subcellular location is the cytoplasm. It is found in the nucleus. Functionally, acts as a negative regulator of the proliferation of normal cells by interacting strongly with CDK4 and CDK6. This inhibits their ability to interact with cyclins D and to phosphorylate the retinoblastoma protein. The sequence is that of Cyclin-dependent kinase inhibitor 2A from Homo sapiens (Human).